Reading from the N-terminus, the 1221-residue chain is X-linked retinitis pigmentosa GTPase regulator-interacting protein 1 (1221 aa).

Composition is skewed to polar residues over residues 1-15 and 88-97; these read MIPT…TQPP and GGTAPSSTSV. 3 disordered regions span residues 1-22, 68-107, and 119-196; these read MIPT…MTRD, AEAA…SCSS, and SLAS…PEKM. Composition is skewed to basic and acidic residues over residues 134–147 and 155–168; these read HRAE…RDRL and FKEH…RGEV. Positions 267 to 533 form a coiled coil; sequence LGAAHNALLS…EEQLKDVAYG (267 aa). Residues 723 to 843 enclose the C2 domain; the sequence is QKDEPRSGTW…AQNKSIQGDF (121 aa). The disordered stretch occupies residues 869–947; it reads PENFPKPEAQ…YSRRKHGRKT (79 aa). The segment covering 903-914 has biased composition (polar residues); that stretch reads QMVSIDTPTEAG. Positions 1027 to 1216 are interaction with RPGR; the sequence is SEAQTTDSDE…ALQAIYKEMT (190 aa).

Belongs to the RPGRIP1 family. As to quaternary structure, forms homodimers and elongated homopolymers. Interacts with NPHP4. Interacts with NEK4. Interacts with RPGR. Interacts with SPATA7. Interacts with CEP290/NPHP6; mediating the association between RPGR and CEP290/NPHP6. As to expression, retina, brain, skeletal muscle and kidney. Colocalizes with RGPR in the outer segment of rod photoreceptors and cone outer segments.

The protein localises to the cell projection. It is found in the cilium. May function as scaffolding protein. Required for normal location of RPGR at the connecting cilium of photoreceptor cells. Required for normal disk morphogenesis and disk organization in the outer segment of photoreceptor cells and for survival of photoreceptor cells. In Bos taurus (Bovine), this protein is X-linked retinitis pigmentosa GTPase regulator-interacting protein 1 (RPGRIP1).